The chain runs to 656 residues: UvrABC system protein C (656 aa).

Residues 16–95 form the GIY-YIG domain; the sequence is TDPGVYRFRD…IKEYSPRFNV (80 aa). One can recognise a UVR domain in the interval 208–243; the sequence is GRFLRQLEAEMKQAAAAQEYERAARIRDDIQALRTV.

Belongs to the UvrC family. In terms of assembly, interacts with UvrB in an incision complex.

The protein localises to the cytoplasm. Its function is as follows. The UvrABC repair system catalyzes the recognition and processing of DNA lesions. UvrC both incises the 5' and 3' sides of the lesion. The N-terminal half is responsible for the 3' incision and the C-terminal half is responsible for the 5' incision. The polypeptide is UvrABC system protein C (Thermobifida fusca (strain YX)).